The primary structure comprises 344 residues: GTP 3',8-cyclase (344 aa).

The Radical SAM core domain occupies Pro19–Asp239. Position 28 (Arg28) interacts with GTP. Residues Cys35 and Cys39 each contribute to the [4Fe-4S] cluster site. Tyr41 contributes to the S-adenosyl-L-methionine binding site. [4Fe-4S] cluster is bound at residue Cys42. Arg77 serves as a coordination point for GTP. Position 81 (Gly81) interacts with S-adenosyl-L-methionine. A GTP-binding site is contributed by Thr111. Residue Ser135 coordinates S-adenosyl-L-methionine. Position 171 (Lys171) interacts with GTP. Met205 serves as a coordination point for S-adenosyl-L-methionine. [4Fe-4S] cluster-binding residues include Cys268 and Cys271. Position 273 to 275 (Arg273 to Arg275) interacts with GTP. Cys285 serves as a coordination point for [4Fe-4S] cluster.

The protein belongs to the radical SAM superfamily. MoaA family. As to quaternary structure, monomer and homodimer. [4Fe-4S] cluster serves as cofactor.

It carries out the reaction GTP + AH2 + S-adenosyl-L-methionine = (8S)-3',8-cyclo-7,8-dihydroguanosine 5'-triphosphate + 5'-deoxyadenosine + L-methionine + A + H(+). Its pathway is cofactor biosynthesis; molybdopterin biosynthesis. Functionally, catalyzes the cyclization of GTP to (8S)-3',8-cyclo-7,8-dihydroguanosine 5'-triphosphate. This chain is GTP 3',8-cyclase, found in Rhodopseudomonas palustris (strain ATCC BAA-98 / CGA009).